A 316-amino-acid chain; its full sequence is Mycothiol acetyltransferase (316 aa).

N-acetyltransferase domains are found at residues 16 to 153 (REVR…VPAV) and 156 to 316 (VRIR…PAAN). Position 36 (Glu-36) interacts with 1D-myo-inositol 2-(L-cysteinylamino)-2-deoxy-alpha-D-glucopyranoside. Acetyl-CoA-binding positions include 83 to 85 (LVV) and 91 to 96 (RRGIGS). 1D-myo-inositol 2-(L-cysteinylamino)-2-deoxy-alpha-D-glucopyranoside is bound by residues Glu-183, Lys-228, and Glu-238. Acetyl-CoA contacts are provided by residues 242–244 (VGV) and 249–255 (QGRGLGQ). Tyr-283 contacts 1D-myo-inositol 2-(L-cysteinylamino)-2-deoxy-alpha-D-glucopyranoside. 288–293 (NVAAVR) contributes to the acetyl-CoA binding site.

Belongs to the acetyltransferase family. MshD subfamily. In terms of assembly, monomer.

It carries out the reaction 1D-myo-inositol 2-(L-cysteinylamino)-2-deoxy-alpha-D-glucopyranoside + acetyl-CoA = mycothiol + CoA + H(+). In terms of biological role, catalyzes the transfer of acetyl from acetyl-CoA to desacetylmycothiol (Cys-GlcN-Ins) to form mycothiol. The sequence is that of Mycothiol acetyltransferase from Mycobacterium avium (strain 104).